A 183-amino-acid chain; its full sequence is Large ribosomal subunit protein uL10 (183 aa).

The protein belongs to the universal ribosomal protein uL10 family. In terms of assembly, part of the ribosomal stalk of the 50S ribosomal subunit. The N-terminus interacts with L11 and the large rRNA to form the base of the stalk. The C-terminus forms an elongated spine to which L12 dimers bind in a sequential fashion forming a multimeric L10(L12)X complex.

Forms part of the ribosomal stalk, playing a central role in the interaction of the ribosome with GTP-bound translation factors. This chain is Large ribosomal subunit protein uL10, found in Mesomycoplasma hyopneumoniae (strain 232) (Mycoplasma hyopneumoniae).